A 576-amino-acid chain; its full sequence is Interleukin-1 receptor type 1 (576 aa).

Residues 1–19 (MENMKVLLGFICLIVPLLS) form the signal peptide. 3 Ig-like C2-type domains span residues 20–115 (LETD…ITMS), 121–217 (PGLC…RVIT), and 229–331 (PVIM…VRLV). The Extracellular portion of the chain corresponds to 20–338 (LETDKCTEYP…RLVYPVPDFK (319 aa)). 3 cysteine pairs are disulfide-bonded: C25–C107, C46–C99, and C145–C199. 2 N-linked (GlcNAc...) asparagine glycosylation sites follow: N63 and N103. 3 N-linked (GlcNAc...) asparagine glycosylation sites follow: N236, N252, and N266. A disulfide bridge connects residues C251 and C315. The helical transmembrane segment at 339–359 (NYLIGGFAIFTATAVFCACIY) threads the bilayer. Residues 360–576 (KVFKVDIVLW…LQAETHLPLG (217 aa)) are Cytoplasmic-facing. The region spanning 386–541 (RTYDAYVLYP…RFWKNLRYQM (156 aa)) is the TIR domain. E473 is a catalytic residue. Y499 bears the Phosphotyrosine mark. Phosphothreonine; by PKC is present on T556.

It belongs to the interleukin-1 receptor family. In terms of assembly, the interleukin-1 receptor complex is a heterodimer of IL1R1 and IL1RAP. Interacts with PIK3R1. Interacts with IL1A. Post-translationally, a soluble form (sIL1R1) is probably produced by proteolytic cleavage at the cell surface (shedding). Rapidly phosphorylated on Tyr-499 in response to IL-1, which creates a SH2 binding site for the PI 3-kinase regulatory subunit PIK3R1.

The protein resides in the membrane. The protein localises to the cell membrane. Its subcellular location is the secreted. The catalysed reaction is NAD(+) + H2O = ADP-D-ribose + nicotinamide + H(+). Its function is as follows. Receptor for IL1A, IL1B and IL1RN. After binding to interleukin-1 associates with the coreceptor IL1RAP to form the high affinity interleukin-1 receptor complex which mediates interleukin-1-dependent activation of NF-kappa-B, MAPK and other pathways. Signaling involves the recruitment of adapter molecules such as TOLLIP, MYD88, and IRAK1 or IRAK2 via the respective TIR domains of the receptor/coreceptor subunits. Binds ligands with comparable affinity and binding of antagonist IL1RN prevents association with IL1RAP to form a signaling complex. Involved in IL1B-mediated costimulation of IFNG production from T-helper 1 (Th1) cells. The chain is Interleukin-1 receptor type 1 (Il1r1) from Rattus norvegicus (Rat).